Consider the following 211-residue polypeptide: NEDD4 family-interacting protein 1 (211 aa).

Over residues 1–13 (MSEQSSSRYQQLQ) the composition is skewed to polar residues. The disordered stretch occupies residues 1-48 (MSEQSSSRYQQLQNEEEPGENPQASTDAPPPYSSIAGESSGLFDYKDE). Residues 1–106 (MSEQSSSRYQ…ADQLRIGNDG (106 aa)) are Cytoplasmic-facing. 2 consecutive short sequence motifs (PPxY motif) follow at residues 29 to 32 (PPPY) and 54 to 57 (PPSY). A helical transmembrane segment spans residues 107–127 (IFMLTFFMAFLFNWIGFFLSF). The Extracellular segment spans residues 128 to 133 (CLTSSA). The helical transmembrane segment at 134–154 (AGRYGAISGFGLSLIKWILIV) threads the bilayer. At 155 to 162 (RFSTYFPG) the chain is on the cytoplasmic side. The helical transmembrane segment at 163-183 (YFDGQYWLWWVFLVLGFLLFL) threads the bilayer. Over 184-211 (RGFINYAKVRKMPDNFSTLPRTRVLFIY) the chain is Extracellular.

Its subcellular location is the golgi apparatus membrane. May play a role in Golgi structure maintenance. This chain is NEDD4 family-interacting protein 1 (ndfip1), found in Xenopus tropicalis (Western clawed frog).